The primary structure comprises 347 residues: Ribosomal RNA small subunit methyltransferase C (347 aa).

It belongs to the methyltransferase superfamily. RsmC family. In terms of assembly, monomer.

It is found in the cytoplasm. The catalysed reaction is guanosine(1207) in 16S rRNA + S-adenosyl-L-methionine = N(2)-methylguanosine(1207) in 16S rRNA + S-adenosyl-L-homocysteine + H(+). Functionally, specifically methylates the guanine in position 1207 of 16S rRNA in the 30S particle. The chain is Ribosomal RNA small subunit methyltransferase C from Yersinia pseudotuberculosis serotype O:1b (strain IP 31758).